We begin with the raw amino-acid sequence, 317 residues long: D-alanine--D-alanine ligase (317 aa).

The region spanning 104-303 (KRVWLQHGLP…YAELCVAILA (200 aa)) is the ATP-grasp domain. 130–185 (PDRLGLPLILKPPHEGSTVGITKVAACADMEQAYAAASHFDEVVLAEQFVRGRELT) is an ATP binding site. Mg(2+)-binding residues include Asp257, Glu270, and Asn272.

Belongs to the D-alanine--D-alanine ligase family. Mg(2+) is required as a cofactor. Mn(2+) serves as cofactor.

It localises to the cytoplasm. The enzyme catalyses 2 D-alanine + ATP = D-alanyl-D-alanine + ADP + phosphate + H(+). The protein operates within cell wall biogenesis; peptidoglycan biosynthesis. In terms of biological role, cell wall formation. In Bordetella avium (strain 197N), this protein is D-alanine--D-alanine ligase.